The chain runs to 412 residues: Multifunctional CCA protein (412 aa).

The ATP site is built by Gly8 and Arg11. CTP-binding residues include Gly8 and Arg11. Asp21 and Asp23 together coordinate Mg(2+). Positions 91, 137, and 140 each coordinate ATP. Arg91, Arg137, and Arg140 together coordinate CTP. Positions 228–329 (TGIHTLMTLS…VKLFDSIDAW (102 aa)) constitute an HD domain.

It belongs to the tRNA nucleotidyltransferase/poly(A) polymerase family. Bacterial CCA-adding enzyme type 1 subfamily. As to quaternary structure, monomer. Can also form homodimers and oligomers. The cofactor is Mg(2+). Requires Ni(2+) as cofactor.

The enzyme catalyses a tRNA precursor + 2 CTP + ATP = a tRNA with a 3' CCA end + 3 diphosphate. It catalyses the reaction a tRNA with a 3' CCA end + 2 CTP + ATP = a tRNA with a 3' CCACCA end + 3 diphosphate. In terms of biological role, catalyzes the addition and repair of the essential 3'-terminal CCA sequence in tRNAs without using a nucleic acid template. Adds these three nucleotides in the order of C, C, and A to the tRNA nucleotide-73, using CTP and ATP as substrates and producing inorganic pyrophosphate. tRNA 3'-terminal CCA addition is required both for tRNA processing and repair. Also involved in tRNA surveillance by mediating tandem CCA addition to generate a CCACCA at the 3' terminus of unstable tRNAs. While stable tRNAs receive only 3'-terminal CCA, unstable tRNAs are marked with CCACCA and rapidly degraded. The protein is Multifunctional CCA protein of Escherichia coli O7:K1 (strain IAI39 / ExPEC).